The sequence spans 202 residues: Pyridoxal 5'-phosphate synthase subunit PdxT (202 aa).

L-glutamine is bound at residue 52–54 (GES). The active-site Nucleophile is Cys84. L-glutamine is bound by residues Arg116 and 143 to 144 (IR). Active-site charge relay system residues include His184 and Glu186.

The protein belongs to the glutaminase PdxT/SNO family. As to quaternary structure, in the presence of PdxS, forms a dodecamer of heterodimers. Only shows activity in the heterodimer.

The enzyme catalyses aldehydo-D-ribose 5-phosphate + D-glyceraldehyde 3-phosphate + L-glutamine = pyridoxal 5'-phosphate + L-glutamate + phosphate + 3 H2O + H(+). The catalysed reaction is L-glutamine + H2O = L-glutamate + NH4(+). It functions in the pathway cofactor biosynthesis; pyridoxal 5'-phosphate biosynthesis. Functionally, catalyzes the hydrolysis of glutamine to glutamate and ammonia as part of the biosynthesis of pyridoxal 5'-phosphate. The resulting ammonia molecule is channeled to the active site of PdxS. The protein is Pyridoxal 5'-phosphate synthase subunit PdxT of Pyrobaculum neutrophilum (strain DSM 2338 / JCM 9278 / NBRC 100436 / V24Sta) (Thermoproteus neutrophilus).